Reading from the N-terminus, the 197-residue chain is Small ribosomal subunit protein uS4c (197 aa).

In terms of domain architecture, S4 RNA-binding spans 84 to 143 (MRLDNIIFQLGMASTIPAARQLVCHRHILVNHRVVDIPSYRCKPRDIISIRNRPTSANAL).

The protein belongs to the universal ribosomal protein uS4 family. In terms of assembly, part of the 30S ribosomal subunit. Contacts protein S5. The interaction surface between S4 and S5 is involved in control of translational fidelity.

The protein localises to the plastid. It localises to the chloroplast. Functionally, one of the primary rRNA binding proteins, it binds directly to 16S rRNA where it nucleates assembly of the body of the 30S subunit. Its function is as follows. With S5 and S12 plays an important role in translational accuracy. This Adiantum capillus-veneris (Maidenhair fern) protein is Small ribosomal subunit protein uS4c (rps4).